The primary structure comprises 238 residues: tRNA (guanine-N(1)-)-methyltransferase (238 aa).

Residues Gly-112 and Leu-131 to Leu-136 each bind S-adenosyl-L-methionine.

Belongs to the RNA methyltransferase TrmD family. Homodimer.

The protein localises to the cytoplasm. The enzyme catalyses guanosine(37) in tRNA + S-adenosyl-L-methionine = N(1)-methylguanosine(37) in tRNA + S-adenosyl-L-homocysteine + H(+). Functionally, specifically methylates guanosine-37 in various tRNAs. The polypeptide is tRNA (guanine-N(1)-)-methyltransferase (Nostoc punctiforme (strain ATCC 29133 / PCC 73102)).